The chain runs to 425 residues: Histidine--tRNA ligase (425 aa).

The protein belongs to the class-II aminoacyl-tRNA synthetase family. Homodimer.

Its subcellular location is the cytoplasm. It carries out the reaction tRNA(His) + L-histidine + ATP = L-histidyl-tRNA(His) + AMP + diphosphate + H(+). This chain is Histidine--tRNA ligase, found in Histophilus somni (strain 129Pt) (Haemophilus somnus).